We begin with the raw amino-acid sequence, 274 residues long: Oxidoreductase stcQ (274 aa).

It belongs to the avfA family.

Its pathway is mycotoxin biosynthesis; sterigmatocystin biosynthesis. Oxidoreductase; part of the gene cluster that mediates the biosynthesis of sterigmatocystin (ST), a polyketide-derived furanocoumarin which is part of the most toxic and carcinogenic compounds among the known mycotoxins. The first step in the biosynthesis of sterigmatocystin is the production of hexanoate by the fatty acid synthase (FAS) units stcJ and stcK. The polyketide backbone is assembled by the non-reducing polyketide synthase stcA by condensation of the starter hexanoyl-CoA and 7 malonyl-CoA extender units followed by cyclization and release of norsolorinic acid. Norsolorinic acid is the first stable intermediate in the biosynthesis of sterigmatocystin and is converted into averantin (AVN) by the ketoreductase stcE which reduces the hexanoate ketone to an alcohol. Averantin is then oxidized into 5'-hydroxyaverantin (HAVN) by the cytochrome P450 monooxygenase stcF. 5'-hydroxyaverantin is further converted to 5'-oxyaverantin (OAVN) by the 5'-hydroxyaverantin dehydrogenase stcG. The next step is the conversion of OAVN into averufin (AVF) which is catalyzed by a yet to be identified enzyme. The cytochrome P450 monooxygenase stcB and the flavin-binding monooxygenase stcW are both required for the conversion of averufin to 1-hydroxyversicolorone. The esterase stcI probably catalyzes the formation of versiconal hemiacetal acetate from 1-hydroxyversicolorone. The oxydoreductase stcN then probably catalyzes the biosynthetic step from versiconal to versicolorin B (VERB). The next step is performed by the versicolorin B desaturase stcL to produce versicolorin A (VERA). The ketoreductase stcU and the cytochrome P450 monooxygenase stcS are involved in the conversion of versicolorin A to demethylsterigmatocystin. The Baeyer-Villiger oxidas stcQ and the reductase stcR might be involved in the biosynthetic step from versicolorin A to demethylsterigmatocystin. The final step in the biosynthesis of sterigmatocystin is the methylation of demethylsterigmatocystin catalyzed by the methyltransferase stcP. The polypeptide is Oxidoreductase stcQ (Emericella nidulans (strain FGSC A4 / ATCC 38163 / CBS 112.46 / NRRL 194 / M139) (Aspergillus nidulans)).